We begin with the raw amino-acid sequence, 395 residues long: Elongation factor Tu (395 aa).

In terms of domain architecture, tr-type G spans 10–204 (KPHVNIGTIG…AVDEYIPTPQ (195 aa)). Positions 19-26 (GHVDHGKT) are G1. A GTP-binding site is contributed by 19–26 (GHVDHGKT). T26 is a binding site for Mg(2+). The segment at 60-64 (GITIS) is G2. The G3 stretch occupies residues 81 to 84 (DCPG). GTP is bound by residues 81–85 (DCPGH) and 136–139 (NKCD). A G4 region spans residues 136-139 (NKCD). Positions 174-176 (SAL) are G5.

This sequence belongs to the TRAFAC class translation factor GTPase superfamily. Classic translation factor GTPase family. EF-Tu/EF-1A subfamily. Monomer.

The protein localises to the cytoplasm. The catalysed reaction is GTP + H2O = GDP + phosphate + H(+). GTP hydrolase that promotes the GTP-dependent binding of aminoacyl-tRNA to the A-site of ribosomes during protein biosynthesis. This Geobacillus sp. (strain WCH70) protein is Elongation factor Tu.